Consider the following 628-residue polypeptide: Protein SDS23 (628 aa).

The disordered stretch occupies residues 1–126 (MVNPPQPRQM…NKSSSQSIAP (126 aa)). Residues 15–24 (RLSTSTSSGP) are compositionally biased toward polar residues. 2 stretches are compositionally biased toward low complexity: residues 40 to 71 (QLQH…PGST) and 109 to 123 (SRHA…SSQS). CBS domains are found at residues 258–319 (LHPK…RFPS) and 334–392 (GSSN…SHLL). A disordered region spans residues 551–609 (GRRTDPQAARNQRRRSSTSTTRSSIDSALSAEGILPSGSAIIGSSNAANTGRRGSVEVS). Positions 587-599 (SGSAIIGSSNAAN) are enriched in low complexity.

The protein belongs to the SDS23 family.

The protein resides in the cytoplasm. It is found in the nucleus. Its function is as follows. Involved in DNA replication and cell separation. This is Protein SDS23 (SDS24) from Candida albicans (strain SC5314 / ATCC MYA-2876) (Yeast).